We begin with the raw amino-acid sequence, 40 residues long: ANDIRPLRDFEDEEAQEFHQAAVQAFFLYVAVAFVAHLPV.

Topologically, residues 1 to 20 (ANDIRPLRDFEDEEAQEFHQ) are cytoplasmic. Residues His19 and His37 each coordinate a bacteriochlorophyll. A helical membrane pass occupies residues 21-40 (AAVQAFFLYVAVAFVAHLPV).

The protein belongs to the antenna complex beta subunit family. In terms of assembly, the core complex is formed by different alpha and beta chains, binding bacteriochlorophyll molecules, and arranged most probably in tetrameric structures disposed around the reaction center. The non-pigmented gamma chains may constitute additional components.

It localises to the cell inner membrane. In terms of biological role, antenna complexes are light-harvesting systems, which transfer the excitation energy to the reaction centers. In Halorhodospira halochloris (Ectothiorhodospira halochloris), this protein is Light-harvesting protein B800/830/1020 beta-1 chain.